A 263-amino-acid chain; its full sequence is Peptidoglycan-N-acetylmuramic acid deacetylase PdaA (263 aa).

Residues 1-23 (MKWMCSICCAAVLLAGGAAQAEA) form the signal peptide. One can recognise a NodB homology domain in the interval 66–247 (KTIYLTFDNG…DLKKQGYTFK (182 aa)). Residue D73 is the Proton acceptor of the active site. Residues H124 and H128 each contribute to the a divalent metal cation site. The active-site Proton donor is the H222.

This sequence belongs to the polysaccharide deacetylase family.

Functionally, catalyzes the deacetylation of N-acetylmuramic acid (MurNAc) residues in glycan strands of peptidoglycan, leading to the formation of muramic delta-lactam residues in spore cortex, after transpeptidation of deacetylated muramic acid residues. PdaA probably carries out both deacetylation and lactam ring formation and requires the product of CwlD activity on peptidoglycan as a substrate. Is required for germination. Cannot use chitin oligomer (hexa-N-acetylchitohexaose) as a substrate. The sequence is that of Peptidoglycan-N-acetylmuramic acid deacetylase PdaA (pdaA) from Bacillus subtilis (strain 168).